The chain runs to 515 residues: 2,3-bisphosphoglycerate-independent phosphoglycerate mutase (515 aa).

Mn(2+) contacts are provided by Asp14 and Ser64. The active-site Phosphoserine intermediate is Ser64. Residues His125, 155–156 (RD), Arg187, Arg193, 263–266 (RADR), and Lys337 each bind substrate. Mn(2+) contacts are provided by Asp404, His408, Asp445, His446, and His464.

The protein belongs to the BPG-independent phosphoglycerate mutase family. Monomer. The cofactor is Mn(2+).

It catalyses the reaction (2R)-2-phosphoglycerate = (2R)-3-phosphoglycerate. The protein operates within carbohydrate degradation; glycolysis; pyruvate from D-glyceraldehyde 3-phosphate: step 3/5. Its function is as follows. Catalyzes the interconversion of 2-phosphoglycerate and 3-phosphoglycerate. The sequence is that of 2,3-bisphosphoglycerate-independent phosphoglycerate mutase from Pseudomonas paraeruginosa (strain DSM 24068 / PA7) (Pseudomonas aeruginosa (strain PA7)).